We begin with the raw amino-acid sequence, 525 residues long: Alcohol O-acetyltransferase 1 (525 aa).

The tract at residues 24 to 41 is membrane association; that stretch reads GHARRMGSVEDLYVALNR. Active-site charge relay system residues include H191 and D195. Residues 508-525 form a membrane association region; it reads QESLEELCSIYKALLLGP.

The protein belongs to the ATF1 alcohol acetyltransferase family.

Its subcellular location is the lipid droplet. The protein resides in the endoplasmic reticulum membrane. It carries out the reaction an aliphatic alcohol + acetyl-CoA = an acetyl ester + CoA. The enzyme catalyses a fatty acyl-CoA + H2O = a fatty acid + CoA + H(+). It catalyses the reaction 3-methylbutanol + acetyl-CoA = 3-methylbutyl acetate + CoA. With respect to regulation, found to be inhibited by cadmium, copper, zinc and mercurium divalent cations and sulfhydryl reagents. Inhibited by the addition of unsaturated fatty acids to the culture. Major alcohol O-acetyltransferase that uses acetyl-CoA to synthesize acetate esters from various alcohols, producing ethyl acetate, isoamyl acetate, isobutyl acetate, butyl acetate, hexyl acetate, heptyl acetate and octyl acetate. The alcohol acyltransferase activity is promiscuous with regard to alcohol but relatively specific for acetyl-CoA since ATF1 does not use any other acyl-CoAs (C3, C4, C5, C6, C8, C10, C12). Acts also as an efficient thioesterase in vitro with specificity towards medium-chain-length acyl-CoAs. In natural environments, the production of aromatic volatile metabolites promotes dispersal through insect vectors. This Saccharomyces cerevisiae (strain ATCC 204508 / S288c) (Baker's yeast) protein is Alcohol O-acetyltransferase 1.